Reading from the N-terminus, the 1142-residue chain is Collagen alpha-1(XIX) chain (1142 aa).

Residues 1-23 (MRLTGPWKLWLWMSIFLLPASTS) form the signal peptide. A Laminin G-like domain is found at 50–234 (NKLEVSGFDL…LHQLKIYCSA (185 aa)). 3 disordered regions span residues 288 to 680 (IPNK…GDPI), 704 to 1009 (PGLK…PGIP), and 1053 to 1142 (YGRP…TGGN). Collagen-like domains follow at residues 292-349 (GEAG…GEKG), 350-391 (DPAL…ALPG), and 392-433 (SLGI…GIQG). Positions 292-351 (GEAGLPGAPGSPGQKGHKGEPGENGLHGAPGFPGQKGEQGFEGSKGETGEKGEQGEKGDP) are triple-helical region 1 (COL1). The segment covering 335–350 (SKGETGEKGEQGEKGD) has biased composition (basic and acidic residues). The tract at residues 370–429 (GPPGPKGEKGDTGPPGPPALPGSLGIQGPQGPPGKEGQRGRRGKTGPPGKPGPPGPPGPP) is triple-helical region 2 (COL2). Low complexity predominate over residues 390–404 (PGSLGIQGPQGPPGK). The segment covering 417-429 (PGKPGPPGPPGPP) has biased composition (pro residues). 2 stretches are compositionally biased toward basic and acidic residues: residues 444 to 463 (KDNKGNDEHEAGGLKGDKGE) and 478 to 496 (QKGEPGEPFTKGEKGDRGE). The tract at residues 448 to 688 (GNDEHEAGGL…PIALPLLGDI (241 aa)) is triple-helical region 3 (COL3). Collagen-like domains follow at residues 474 to 516 (GPKG…GPPG), 568 to 624 (GPPG…GPQG), 626 to 678 (GIPG…PPGD), 728 to 778 (KGDI…APGP), 779 to 814 (TGPPGLMGRTGHPGPTGAKGEKGSDGPPGKPGPPGP), 845 to 903 (GPPG…VPGE), 904 to 947 (PGER…GDRG), and 948 to 1004 (PKGE…GSPG). Residues 640–651 (PGIQGPRGLPGL) are compositionally biased toward low complexity. The tract at residues 700–818 (QASVPGLKSN…PGPPGPPGIP (119 aa)) is triple-helical region 4 (COL4). Basic and acidic residues-rich tracts occupy residues 720-731 (GKYDSMARKGDI) and 743-752 (EGPKGSKGER). Composition is skewed to pro residues over residues 806 to 817 (PGKPGPPGPPGI) and 840 to 852 (YPGPPGPPGPKGD). Positions 833–1012 (GGVNVPSYPG…PGIPGIPADA (180 aa)) are triple-helical region 5 (COL5). The segment covering 943-954 (PGDRGPKGERGD) has biased composition (basic and acidic residues). Positions 952-954 (RGD) match the Cell attachment site motif. The segment at 1054–1111 (GRPGPPGKDGLPGPPGDPGPQGYRGQKGERGEPGIGLPGSPGLPGTSALGLPGSPGAP) is triple-helical region 6 (COL6). Over residues 1093-1107 (SPGLPGTSALGLPGS) the composition is skewed to low complexity. Residues 1108 to 1119 (PGAPGPQGPPGP) are compositionally biased toward pro residues.

The protein belongs to the fibril-associated collagens with interrupted helices (FACIT) family. Oligomer; disulfide-linked. In terms of processing, prolines at the third position of the tripeptide repeating unit (G-X-Y) are hydroxylated in some or all of the chains. As to expression, localized to vascular, neuronal, mesenchymal, and some epithelial basement membrane zones in umbilical cord.

The protein resides in the secreted. The protein localises to the extracellular space. It localises to the extracellular matrix. May act as a cross-bridge between fibrils and other extracellular matrix molecules. Involved in skeletal myogenesis in the developing esophagus. May play a role in organization of the pericellular matrix or the sphinteric smooth muscle. The polypeptide is Collagen alpha-1(XIX) chain (COL19A1) (Homo sapiens (Human)).